The chain runs to 415 residues: L-cysteine:1D-myo-inositol 2-amino-2-deoxy-alpha-D-glucopyranoside ligase 2 (415 aa).

Position 44 (Cys44) interacts with Zn(2+). L-cysteinyl-5'-AMP is bound by residues Cys44–Thr47, Thr59, and Asn82–Thr84. A 'HIGH' region motif is present at residues Ile46–His56. The 'ERGGDP' region signature appears at Glu188 to Pro193. Trp228 contributes to the L-cysteinyl-5'-AMP binding site. Residue Cys232 coordinates Zn(2+). Gly250–Asp252 is an L-cysteinyl-5'-AMP binding site. His257 contributes to the Zn(2+) binding site. Ile284 is an L-cysteinyl-5'-AMP binding site. A 'KMSKS' region motif is present at residues Lys290–Ser294.

It belongs to the class-I aminoacyl-tRNA synthetase family. MshC subfamily. Monomer. It depends on Zn(2+) as a cofactor.

The enzyme catalyses 1D-myo-inositol 2-amino-2-deoxy-alpha-D-glucopyranoside + L-cysteine + ATP = 1D-myo-inositol 2-(L-cysteinylamino)-2-deoxy-alpha-D-glucopyranoside + AMP + diphosphate + H(+). Functionally, catalyzes the ATP-dependent condensation of GlcN-Ins and L-cysteine to form L-Cys-GlcN-Ins. The sequence is that of L-cysteine:1D-myo-inositol 2-amino-2-deoxy-alpha-D-glucopyranoside ligase 2 from Corynebacterium jeikeium (strain K411).